The sequence spans 272 residues: Putative hydro-lyase BRADO2538 (272 aa).

It belongs to the D-glutamate cyclase family.

The sequence is that of Putative hydro-lyase BRADO2538 from Bradyrhizobium sp. (strain ORS 278).